Here is a 428-residue protein sequence, read N- to C-terminus: Type II methyltransferase M.BanI (428 aa).

Positions 3–417 constitute an SAM-dependent MTase C5-type domain; sequence IKFVDLFAGI…EDLFQNNVNE (415 aa). Cys76 is an active-site residue.

The protein belongs to the class I-like SAM-binding methyltransferase superfamily. C5-methyltransferase family. As to quaternary structure, monomer.

It catalyses the reaction a 2'-deoxycytidine in DNA + S-adenosyl-L-methionine = a 5-methyl-2'-deoxycytidine in DNA + S-adenosyl-L-homocysteine + H(+). Its function is as follows. A methylase, recognizes the double-stranded sequence 5'-GGYRCC-3', methylates C-4 on both strands, and protects the DNA from cleavage by the BanI endonuclease. This is Type II methyltransferase M.BanI (banIM) from Aneurinibacillus aneurinilyticus (Bacillus aneurinolyticus).